Here is a 461-residue protein sequence, read N- to C-terminus: Thyroid hormone receptor beta (461 aa).

The disordered stretch occupies residues 1 to 24; the sequence is MTPNSMTENGLPAWDKQKPRPDRG. Positions 1-106 are modulating; it reads MTPNSMTENG…IPSYLDKDEL (106 aa). Residues 15-24 show a composition bias toward basic and acidic residues; that stretch reads DKQKPRPDRG. Zn(2+)-binding residues include Cys107, Cys110, Cys124, Cys127, Cys145, Cys151, Cys161, and Cys164. 2 consecutive NR C4-type zinc fingers follow at residues 107–127 and 145–169; these read CVVC…CEGC and CKYE…FKKC. The nuclear receptor DNA-binding region spans 107–181; that stretch reads CVVCGDKATG…VGMATDLVLD (75 aa). Residues 217 to 461 form the NR LBD domain; the sequence is EEWELIKTVT…PPLFLEVFED (245 aa). Residues 244–461 are interaction with NR2F6; sequence KFLPEDIGQA…PPLFLEVFED (218 aa). Arg282, Asn331, and His435 together coordinate 3,3',5-triiodo-L-thyronine. 3 residues coordinate L-thyroxine: Arg282, Asn331, and His435.

This sequence belongs to the nuclear hormone receptor family. NR1 subfamily. As to quaternary structure, binds DNA as a dimer; homodimer and heterodimer with RXRB. Interacts with the coactivators NCOA1/SRC1, NCOA2/GRIP1, NCOA7 and MED1/TRAP220 in a ligand-inducible manner. Interacts with the corepressor NCOR1 in absence of ligand. Interacts with C1D. Interacts with NR2F6; the interaction impairs the binding of the THRB homodimer and THRB:RXRB heterodimer to T3 response elements. Interacts with PRMT2 and THRSP. Interacts with TACC1; this interaction is decreased in the presence of thyroid hormone T3.

It localises to the nucleus. Its function is as follows. Nuclear hormone receptor that can act as a repressor or activator of transcription. High affinity receptor for thyroid hormones, including triiodothyronine and thyroxine. This is Thyroid hormone receptor beta (Thrb) from Mus musculus (Mouse).